A 102-amino-acid polypeptide reads, in one-letter code: NADH-quinone oxidoreductase subunit K (102 aa).

3 consecutive transmembrane segments (helical) span residues 5 to 25, 31 to 51, and 62 to 82; these read LGHF…GIFL, IVLL…FVAF, and VFVF…LAIL.

It belongs to the complex I subunit 4L family. In terms of assembly, NDH-1 is composed of 14 different subunits. Subunits NuoA, H, J, K, L, M, N constitute the membrane sector of the complex.

The protein localises to the cell inner membrane. It catalyses the reaction a quinone + NADH + 5 H(+)(in) = a quinol + NAD(+) + 4 H(+)(out). Functionally, NDH-1 shuttles electrons from NADH, via FMN and iron-sulfur (Fe-S) centers, to quinones in the respiratory chain. The immediate electron acceptor for the enzyme in this species is believed to be ubiquinone. Couples the redox reaction to proton translocation (for every two electrons transferred, four hydrogen ions are translocated across the cytoplasmic membrane), and thus conserves the redox energy in a proton gradient. In Paracidovorax citrulli (strain AAC00-1) (Acidovorax citrulli), this protein is NADH-quinone oxidoreductase subunit K.